Consider the following 336-residue polypeptide: DNA-directed RNA polymerase subunit alpha (336 aa).

An alpha N-terminal domain (alpha-NTD) region spans residues 1-234 (MIEFVIPKKL…NHFKIVTEGL (234 aa)). The tract at residues 269-336 (VYNRKIDELE…KFGLELRKGE (68 aa)) is alpha C-terminal domain (alpha-CTD).

The protein belongs to the RNA polymerase alpha chain family. In terms of assembly, homodimer. The RNAP catalytic core consists of 2 alpha, 1 beta, 1 beta' and 1 omega subunit. When a sigma factor is associated with the core the holoenzyme is formed, which can initiate transcription.

The catalysed reaction is RNA(n) + a ribonucleoside 5'-triphosphate = RNA(n+1) + diphosphate. Functionally, DNA-dependent RNA polymerase catalyzes the transcription of DNA into RNA using the four ribonucleoside triphosphates as substrates. The protein is DNA-directed RNA polymerase subunit alpha of Thermotoga petrophila (strain ATCC BAA-488 / DSM 13995 / JCM 10881 / RKU-1).